Consider the following 207-residue polypeptide: ATP-dependent Clp protease proteolytic subunit (207 aa).

The propeptide occupies 1–14 (MSYSGERDNLAPHM). Serine 111 (nucleophile) is an active-site residue. Residue histidine 136 is part of the active site.

This sequence belongs to the peptidase S14 family. As to quaternary structure, fourteen ClpP subunits assemble into 2 heptameric rings which stack back to back to give a disk-like structure with a central cavity, resembling the structure of eukaryotic proteasomes. Component of the ClpAP and ClpXP complexes.

Its subcellular location is the cytoplasm. The catalysed reaction is Hydrolysis of proteins to small peptides in the presence of ATP and magnesium. alpha-casein is the usual test substrate. In the absence of ATP, only oligopeptides shorter than five residues are hydrolyzed (such as succinyl-Leu-Tyr-|-NHMec, and Leu-Tyr-Leu-|-Tyr-Trp, in which cleavage of the -Tyr-|-Leu- and -Tyr-|-Trp bonds also occurs).. In terms of biological role, cleaves peptides in various proteins in a process that requires ATP hydrolysis. Has a chymotrypsin-like activity. Plays a major role in the degradation of misfolded proteins. The polypeptide is ATP-dependent Clp protease proteolytic subunit (Salmonella paratyphi A (strain ATCC 9150 / SARB42)).